The following is a 62-amino-acid chain: KHNFLNHGLSLNLVIKPYLALEGSVAFPAENGVQDTESTQEKRETGDEENSAQFPIGRRDFD.

Residues 23–41 (GSVAFPAENGVQDTESTQE) are NGE-like. Residues 28-62 (PAENGVQDTESTQEKRETGDEENSAQFPIGRRDFD) are disordered. The interval 44–56 (ETGDEENSAQFPI) is NEI-like. Residues 60-62 (DFD) are melanin-concentrating hormone-like.

It belongs to the melanin-concentrating hormone family.

The sequence is that of Pro-MCH variant (PMCHL1) from Hylobates lar (Lar gibbon).